The primary structure comprises 407 residues: Phosphopentomutase (407 aa).

Positions 11, 305, 310, 346, 347, and 358 each coordinate Mn(2+).

The protein belongs to the phosphopentomutase family. Mn(2+) serves as cofactor.

The protein resides in the cytoplasm. The enzyme catalyses 2-deoxy-alpha-D-ribose 1-phosphate = 2-deoxy-D-ribose 5-phosphate. It catalyses the reaction alpha-D-ribose 1-phosphate = D-ribose 5-phosphate. Its pathway is carbohydrate degradation; 2-deoxy-D-ribose 1-phosphate degradation; D-glyceraldehyde 3-phosphate and acetaldehyde from 2-deoxy-alpha-D-ribose 1-phosphate: step 1/2. In terms of biological role, isomerase that catalyzes the conversion of deoxy-ribose 1-phosphate (dRib-1-P) and ribose 1-phosphate (Rib-1-P) to deoxy-ribose 5-phosphate (dRib-5-P) and ribose 5-phosphate (Rib-5-P), respectively. This is Phosphopentomutase from Legionella pneumophila (strain Corby).